Consider the following 445-residue polypeptide: Tubulin beta-1 chain (445 aa).

Residues Q11, E69, S138, G142, T143, G144, N204, and N226 each contribute to the GTP site. A Mg(2+)-binding site is contributed by E69. Residues 422–445 (QYQDAGMDDEYGEEYEDEAPAEEE) form a disordered region. The span at 427-445 (GMDDEYGEEYEDEAPAEEE) shows a compositional bias: acidic residues.

Belongs to the tubulin family. As to quaternary structure, dimer of alpha and beta chains. A typical microtubule is a hollow water-filled tube with an outer diameter of 25 nm and an inner diameter of 15 nM. Alpha-beta heterodimers associate head-to-tail to form protofilaments running lengthwise along the microtubule wall with the beta-tubulin subunit facing the microtubule plus end conferring a structural polarity. Microtubules usually have 13 protofilaments but different protofilament numbers can be found in some organisms and specialized cells. Mg(2+) serves as cofactor.

Its subcellular location is the cytoplasm. It is found in the cytoskeleton. Its function is as follows. Tubulin is the major constituent of microtubules, a cylinder consisting of laterally associated linear protofilaments composed of alpha- and beta-tubulin heterodimers. Microtubules grow by the addition of GTP-tubulin dimers to the microtubule end, where a stabilizing cap forms. Below the cap, tubulin dimers are in GDP-bound state, owing to GTPase activity of alpha-tubulin. In Colletotrichum graminicola (Maize anthracnose fungus), this protein is Tubulin beta-1 chain (TUB1).